The sequence spans 286 residues: Small ribosomal subunit protein uS2 (286 aa).

Residues 231-286 (ERAQAEAKAAAGDNDAPVSSEGESTEVASDAASTASETTATSSDESAAESSEAESK) form a disordered region. Residues 255–280 (TEVASDAASTASETTATSSDESAAES) are compositionally biased toward low complexity.

It belongs to the universal ribosomal protein uS2 family.

In Corynebacterium kroppenstedtii (strain DSM 44385 / JCM 11950 / CIP 105744 / CCUG 35717), this protein is Small ribosomal subunit protein uS2.